Reading from the N-terminus, the 88-residue chain is MGRSLRKGPFVDHSLIKKVRAMNLLEKKAPIKTWSRRSMITPEMIGHTFEVHNGKKFLTVFVSETMVGHKLGEFSPTRMFKSHPVKKG.

Belongs to the universal ribosomal protein uS19 family.

In terms of biological role, protein S19 forms a complex with S13 that binds strongly to the 16S ribosomal RNA. In Chlamydia felis (strain Fe/C-56) (Chlamydophila felis), this protein is Small ribosomal subunit protein uS19.